The chain runs to 312 residues: MLQYQIDRIDHQISDDRSQTGTFLIGPLERGQATTLGNSLRRVLMGGLEGSAVTAVRISGINHEYATIPGVREDVLDILLNCKQLSINSSNPETEIGRLVVNGPMEVKANDIQFSSQVEIVDGEKPIATIQEGHNLELEIHVERGVGYRPVDRRNQETTAIDLLQIDAVFMPVKRVNFTIDETAVAEGATGRERLTMEVVTDGSTSPDDAIAEAANQLIELFQPLATVTMVEEIPEEPEPSPEAQIPLEELNLSVRAYNCLKRAQVNSVSDLMGFSYEDLLEIKNFGSKSADEVIEALERIGISIPQSRTSV.

The tract at residues 1-229 (MLQYQIDRID…ELFQPLATVT (229 aa)) is alpha N-terminal domain (alpha-NTD). The segment at 246-312 (IPLEELNLSV…ISIPQSRTSV (67 aa)) is alpha C-terminal domain (alpha-CTD).

It belongs to the RNA polymerase alpha chain family. In cyanobacteria the RNAP catalytic core is composed of 2 alpha, 1 beta, 1 beta', 1 gamma and 1 omega subunit. When a sigma factor is associated with the core the holoenzyme is formed, which can initiate transcription.

The enzyme catalyses RNA(n) + a ribonucleoside 5'-triphosphate = RNA(n+1) + diphosphate. Functionally, DNA-dependent RNA polymerase catalyzes the transcription of DNA into RNA using the four ribonucleoside triphosphates as substrates. The protein is DNA-directed RNA polymerase subunit alpha of Prochlorococcus marinus subsp. pastoris (strain CCMP1986 / NIES-2087 / MED4).